Here is a 479-residue protein sequence, read N- to C-terminus: Ribulose bisphosphate carboxylase large chain (479 aa).

A propeptide spanning residues 1 to 2 is cleaved from the precursor; the sequence is MS. Positions 123 and 173 each coordinate substrate. Catalysis depends on Lys-175, which acts as the Proton acceptor. Lys-177 serves as a coordination point for substrate. 3 residues coordinate Mg(2+): Lys-201, Asp-203, and Glu-204. Lys-201 bears the N6-carboxylysine mark. The residue at position 208 (Ser-208) is a Phosphoserine. The active-site Proton acceptor is the His-294. Residues Arg-295 and His-327 each coordinate substrate. Residue Thr-330 is modified to Phosphothreonine. Substrate is bound at residue Ser-379.

Belongs to the RuBisCO large chain family. Type I subfamily. Heterohexadecamer of 8 large chains and 8 small chains; disulfide-linked. The disulfide link is formed within the large subunit homodimers. Mg(2+) is required as a cofactor. The disulfide bond which can form in the large chain dimeric partners within the hexadecamer appears to be associated with oxidative stress and protein turnover.

Its subcellular location is the plastid. It localises to the chloroplast. It catalyses the reaction 2 (2R)-3-phosphoglycerate + 2 H(+) = D-ribulose 1,5-bisphosphate + CO2 + H2O. The enzyme catalyses D-ribulose 1,5-bisphosphate + O2 = 2-phosphoglycolate + (2R)-3-phosphoglycerate + 2 H(+). Functionally, ruBisCO catalyzes two reactions: the carboxylation of D-ribulose 1,5-bisphosphate, the primary event in carbon dioxide fixation, as well as the oxidative fragmentation of the pentose substrate in the photorespiration process. Both reactions occur simultaneously and in competition at the same active site. This Nasturtium officinale (Watercress) protein is Ribulose bisphosphate carboxylase large chain.